The primary structure comprises 442 residues: Transducin beta-like protein 2 (442 aa).

The disordered stretch occupies residues 36 to 71 (EKPSQPVCQKENEPKKSGSKKQKQNQRVRKEKPQQH). Over residues 52 to 65 (SGSKKQKQNQRVRK) the composition is skewed to basic residues. 7 WD repeats span residues 84 to 123 (SHSG…QREH), 130 to 170 (VELD…DGGF), 182 to 222 (KHKA…STIN), 224 to 263 (NQMN…GEFQ), 273 to 312 (GHSA…KKQQ), 323 to 362 (EEAS…KEEY), and 366 to 404 (VHGE…RAVV). Lysine 164 participates in a covalent cross-link: Glycyl lysine isopeptide (Lys-Gly) (interchain with G-Cter in SUMO2). At threonine 428 the chain carries Phosphothreonine.

This chain is Transducin beta-like protein 2 (Tbl2), found in Mus musculus (Mouse).